A 400-amino-acid chain; its full sequence is Ribosomal RNA large subunit methyltransferase I (400 aa).

The PUA domain maps to 6-84; that stretch reads FPRLVLAKGR…NEAIDSAFFE (79 aa).

Belongs to the methyltransferase superfamily. RlmI family.

It is found in the cytoplasm. It carries out the reaction cytidine(1962) in 23S rRNA + S-adenosyl-L-methionine = 5-methylcytidine(1962) in 23S rRNA + S-adenosyl-L-homocysteine + H(+). In terms of biological role, specifically methylates the cytosine at position 1962 (m5C1962) of 23S rRNA. The chain is Ribosomal RNA large subunit methyltransferase I from Klebsiella pneumoniae (strain 342).